Reading from the N-terminus, the 168-residue chain is 2-C-methyl-D-erythritol 2,4-cyclodiphosphate synthase (168 aa).

2 residues coordinate a divalent metal cation: aspartate 11 and histidine 13. 4-CDP-2-C-methyl-D-erythritol 2-phosphate-binding positions include 11–13 (DVH) and 41–42 (HS). Histidine 49 contributes to the a divalent metal cation binding site. 4-CDP-2-C-methyl-D-erythritol 2-phosphate is bound by residues 63-65 (DIG), 68-72 (FPDTD), 139-142 (TTTE), phenylalanine 146, and arginine 149.

Belongs to the IspF family. Homotrimer. It depends on a divalent metal cation as a cofactor.

The catalysed reaction is 4-CDP-2-C-methyl-D-erythritol 2-phosphate = 2-C-methyl-D-erythritol 2,4-cyclic diphosphate + CMP. Its pathway is isoprenoid biosynthesis; isopentenyl diphosphate biosynthesis via DXP pathway; isopentenyl diphosphate from 1-deoxy-D-xylulose 5-phosphate: step 4/6. Functionally, involved in the biosynthesis of isopentenyl diphosphate (IPP) and dimethylallyl diphosphate (DMAPP), two major building blocks of isoprenoid compounds. Catalyzes the conversion of 4-diphosphocytidyl-2-C-methyl-D-erythritol 2-phosphate (CDP-ME2P) to 2-C-methyl-D-erythritol 2,4-cyclodiphosphate (ME-CPP) with a corresponding release of cytidine 5-monophosphate (CMP). This is 2-C-methyl-D-erythritol 2,4-cyclodiphosphate synthase from Psychrobacter arcticus (strain DSM 17307 / VKM B-2377 / 273-4).